We begin with the raw amino-acid sequence, 260 residues long: UPF0246 protein Bphyt_1375 (260 aa).

The protein belongs to the UPF0246 family.

This Paraburkholderia phytofirmans (strain DSM 17436 / LMG 22146 / PsJN) (Burkholderia phytofirmans) protein is UPF0246 protein Bphyt_1375.